The primary structure comprises 184 residues: uncharacterized protein (184 aa).

Residues 1 to 20 form the signal peptide; it reads MKKQILALVCGVIFSSSTWA.

This sequence to E.coli YtfJ.

Its subcellular location is the periplasm. This is an uncharacterized protein from Haemophilus influenzae (strain ATCC 51907 / DSM 11121 / KW20 / Rd).